Reading from the N-terminus, the 386-residue chain is Succinate--CoA ligase [ADP-forming] subunit beta (386 aa).

Residues 9-244 form the ATP-grasp domain; sequence KEILRKYGVP…HDEEDPLETR (236 aa). ATP-binding positions include Lys-46, 53 to 55, Glu-99, Cys-102, and Glu-107; that span reads GRG. Mg(2+) contacts are provided by Asn-199 and Asp-213. Residues Asn-264 and 321 to 323 contribute to the substrate site; that span reads GIM.

It belongs to the succinate/malate CoA ligase beta subunit family. In terms of assembly, heterotetramer of two alpha and two beta subunits. Requires Mg(2+) as cofactor.

The catalysed reaction is succinate + ATP + CoA = succinyl-CoA + ADP + phosphate. It catalyses the reaction GTP + succinate + CoA = succinyl-CoA + GDP + phosphate. It functions in the pathway carbohydrate metabolism; tricarboxylic acid cycle; succinate from succinyl-CoA (ligase route): step 1/1. Its function is as follows. Succinyl-CoA synthetase functions in the citric acid cycle (TCA), coupling the hydrolysis of succinyl-CoA to the synthesis of either ATP or GTP and thus represents the only step of substrate-level phosphorylation in the TCA. The beta subunit provides nucleotide specificity of the enzyme and binds the substrate succinate, while the binding sites for coenzyme A and phosphate are found in the alpha subunit. This chain is Succinate--CoA ligase [ADP-forming] subunit beta, found in Rickettsia conorii (strain ATCC VR-613 / Malish 7).